An 86-amino-acid chain; its full sequence is MAEKRKYSRKYCKYTEAKIDFIDYKDTSLLKYCLSERFKIMPRRLTGTSKKYQEMVEKAIKRARHAAIIPYIVDRKDVVTNPFEGI.

It belongs to the bacterial ribosomal protein bS18 family. As to quaternary structure, part of the 30S ribosomal subunit. Forms a tight heterodimer with protein bS6.

Its function is as follows. Binds as a heterodimer with protein bS6 to the central domain of the 16S rRNA, where it helps stabilize the platform of the 30S subunit. This chain is Small ribosomal subunit protein bS18, found in Campylobacter curvus (strain 525.92).